A 376-amino-acid chain; its full sequence is MGHRFLRGLLTLLLPPPPLYTRHRMLGPESVPPPKRSRSKLMAPPRIGTHNGTFHCDEALACALLRLLPEYRDAEIVRTRDPEKLASCDIVVDVGGEYDPRRHRYDHHQRSFTETMSSLSPGKPWQTKLSSAGLIYLHFGHKLLAQLLGTSEEDSMVGTLYDKMYENFVEEVDAVDNGISQWAEGEPRYALTTTLSARVARLNPTWNHPDQDTEAGFKRAMDLVQEEFLQRLDFYQHSWLPARALVEEALAQRFQVDPSGEIVELAKGACPWKEHLYHLESGLSPPVAIFFVIYTDQAGQWRIQCVPKEPHSFQSRLPLPEPWRGLRDEALDQVSGIPGCIFVHASGFIGGHRTREGALSMARATLAQRSYLPQIS.

The transit peptide at 1 to 47 (MGHRFLRGLLTLLLPPPPLYTRHRMLGPESVPPPKRSRSKLMAPPRI) directs the protein to the mitochondrion. Position 120 is a phosphoserine (serine 120). Lysine 267 and lysine 273 each carry N6-acetyllysine.

This sequence belongs to the MYG1 family. In terms of tissue distribution, ubiquitously expressed, with highest levels in testis.

It is found in the nucleus. The protein resides in the nucleoplasm. It localises to the mitochondrion matrix. Its subcellular location is the nucleolus. In terms of biological role, 3'-5' RNA exonuclease which cleaves in situ on specific transcripts in both nucleus and mitochondrion. Involved in regulating spatially segregated organellar RNA processing, acts as a coordinator of nucleo-mitochondrial crosstalk. In nucleolus, processes pre-ribosomal RNA involved in ribosome assembly and alters cytoplasmic translation. In mitochondrial matrix, processes 3'-termini of the mito-ribosomal and messenger RNAs and controls translation of mitochondrial proteins. The polypeptide is MYG1 exonuclease (Homo sapiens (Human)).